The sequence spans 421 residues: MIILALNCGSSSVKYQLFDWERKEVVAKGMVERVIIGDSFIMHEVPGRETYRKEYECPDHQVAIDLIIRTVVDADHGVLKDINEISAVGHRVVHGGEMFTRSVLIDEKVLDAVKEVQHLAPLHNPPNIAGIEAAQAVLPHVPHVAIFDTAFHQTMPEHAYLYPLPYEWYEKYGVRRYGFHGTSHLYVSKRAAVLLGKTPSECNIITMHIGNGVSHCAIKGGVSVDTSMGLTPLEGAVMGTRCGDIDPAIPAFMMQKENLSAKEIDSILNKKSGVLGVTGRFTDRRDVIEHASNGDHRCKVALDIEAYRLKKYIGTYMAVLGRLDAVVFTAGVGEMGWPIREKTIEGLEGIGIKLDRERNKGAMTRKRESLITTDDSPIKVFVIPTDEELVFTEDVVAILNGTYTDHMNFDYSFARTDFVRK.

Asparagine 7 contributes to the Mg(2+) binding site. Lysine 14 lines the ATP pocket. Arginine 91 provides a ligand contact to substrate. The Proton donor/acceptor role is filled by aspartate 148. ATP contacts are provided by residues 208–212 (HIGNG) and 283–285 (DRR). Glutamate 387 contributes to the Mg(2+) binding site.

This sequence belongs to the acetokinase family. As to quaternary structure, homodimer. Requires Mg(2+) as cofactor. Mn(2+) serves as cofactor.

It is found in the cytoplasm. The catalysed reaction is acetate + ATP = acetyl phosphate + ADP. Its pathway is metabolic intermediate biosynthesis; acetyl-CoA biosynthesis; acetyl-CoA from acetate: step 1/2. Catalyzes the formation of acetyl phosphate from acetate and ATP. Can also catalyze the reverse reaction. The chain is Acetate kinase from Geobacter sulfurreducens (strain ATCC 51573 / DSM 12127 / PCA).